A 265-amino-acid polypeptide reads, in one-letter code: Putative pyruvate, phosphate dikinase regulatory protein 2 (265 aa).

Residue Gly-150–Thr-157 participates in ADP binding.

Belongs to the pyruvate, phosphate/water dikinase regulatory protein family. PDRP subfamily.

It catalyses the reaction N(tele)-phospho-L-histidyl/L-threonyl-[pyruvate, phosphate dikinase] + ADP = N(tele)-phospho-L-histidyl/O-phospho-L-threonyl-[pyruvate, phosphate dikinase] + AMP + H(+). It carries out the reaction N(tele)-phospho-L-histidyl/O-phospho-L-threonyl-[pyruvate, phosphate dikinase] + phosphate + H(+) = N(tele)-phospho-L-histidyl/L-threonyl-[pyruvate, phosphate dikinase] + diphosphate. In terms of biological role, bifunctional serine/threonine kinase and phosphorylase involved in the regulation of the pyruvate, phosphate dikinase (PPDK) by catalyzing its phosphorylation/dephosphorylation. The sequence is that of Putative pyruvate, phosphate dikinase regulatory protein 2 from Latilactobacillus sakei subsp. sakei (strain 23K) (Lactobacillus sakei subsp. sakei).